A 108-amino-acid polypeptide reads, in one-letter code: Urease subunit gamma (108 aa).

The protein belongs to the urease gamma subunit family. Heterotrimer of UreA (gamma), UreB (beta) and UreC (alpha) subunits. Three heterotrimers associate to form the active enzyme.

Its subcellular location is the cytoplasm. It catalyses the reaction urea + 2 H2O + H(+) = hydrogencarbonate + 2 NH4(+). It participates in nitrogen metabolism; urea degradation; CO(2) and NH(3) from urea (urease route): step 1/1. The protein is Urease subunit gamma of Haloquadratum walsbyi (strain DSM 16790 / HBSQ001).